The sequence spans 552 residues: Non-structural protein NS1 (552 aa).

This sequence belongs to the orbivirus non-structural protein NS1 family.

The sequence is that of Non-structural protein NS1 (Segment-5) from Bluetongue virus 13 (isolate USA) (BTV 13).